Here is a 366-residue protein sequence, read N- to C-terminus: Carboxy-cis,cis-muconate cyclase (366 aa).

Catalysis depends on residues histidine 149, arginine 197, glutamate 213, and arginine 275.

It belongs to the cycloisomerase 2 family. As to quaternary structure, homotetramer.

It carries out the reaction 3-carboxy-2,5-dihydro-5-oxofuran-2-acetate = 3-carboxy-cis,cis-muconate. Its pathway is aromatic compound metabolism; beta-ketoadipate pathway; 3-carboxy-cis,cis-muconate from 3-carboxy-2,5-dihydro-5-oxofuran-2-acetate: step 1/1. Functionally, catalyzes a syn cycloisomerization. Also possesses mle activity. The polypeptide is Carboxy-cis,cis-muconate cyclase (Neurospora crassa (strain ATCC 24698 / 74-OR23-1A / CBS 708.71 / DSM 1257 / FGSC 987)).